The primary structure comprises 97 residues: MAIGFICSSPDAELFSEKSRMSSSVLLGCLLCCMDWSAAVPGKTEPFRKLFDAIMIKKLKSCSAAYPSDLDEGSMCDMADASPTSLELGLSKLDKES.

2 disulfide bridges follow: C32-C62 and C33-C76.

It belongs to the intercrine beta (chemokine CC) family. Highly divergent.

This Human herpesvirus 6A (strain Uganda-1102) (HHV-6 variant A) protein is Putative CC-type chemokine U83 (U83).